A 248-amino-acid chain; its full sequence is 14-3-3 protein sigma (248 aa).

Phosphoserine is present on residues Ser-5, Ser-74, and Ser-248.

This sequence belongs to the 14-3-3 family. As to quaternary structure, homodimer. Interacts with KRT17 and SAMSN1. Found in a complex with XPO7, EIF4A1, ARHGAP1, VPS26A, VPS29 and VPS35. Interacts with GAB2. Interacts with SRPK2. Interacts with COPS6. Interacts with COP1; this interaction leads to proteasomal degradation. Interacts with the 'Thr-369' phosphorylated form of DAPK2. Interacts with PI4KB. Interacts with SLITRK1. Interacts with LRRK2; this interaction is dependent on LRRK2 phosphorylation. Interacts with PKP3 (via N-terminus); the interaction maintains the cytoplasmic pool of PKP3, facilitates PKP3 exchange at desmosomes and restricts PKP3 localization to existing desmosome cell junctions. Interacts with LCP2. In terms of processing, ubiquitinated. Ubiquitination by RFFL induces proteasomal degradation and indirectly regulates p53/TP53 activation.

The protein resides in the cytoplasm. It localises to the nucleus. Its subcellular location is the secreted. Functionally, adapter protein implicated in the regulation of a large spectrum of both general and specialized signaling pathways. Binds to a large number of partners, usually by recognition of a phosphoserine or phosphothreonine motif. Binding generally results in the modulation of the activity of the binding partner. Promotes cytosolic retention of GBP1 GTPase by binding to phosphorylated GBP1, thereby inhibiting the innate immune response. Also acts as a TP53/p53-regulated inhibitor of G2/M progression. When bound to KRT17, regulates protein synthesis and epithelial cell growth by stimulating Akt/mTOR pathway. Acts to maintain desmosome cell junction adhesion in epithelial cells via interacting with and sequestering PKP3 to the cytoplasm, thereby restricting its translocation to existing desmosome structures and therefore maintaining desmosome protein homeostasis. Also acts to facilitate PKP3 exchange at desmosome plaques, thereby maintaining keratinocyte intercellular adhesion. May also regulate MDM2 autoubiquitination and degradation and thereby activate p53/TP53. The polypeptide is 14-3-3 protein sigma (SFN) (Bos taurus (Bovine)).